The following is a 136-amino-acid chain: MLAPKKQKFRKAHKGRVASKAKAGTTLAFGSFGLKSIDGWRVTARQIEAGRKAATRCMKRQGRLWIRIFPDVPVSKKPAEVRMGKGKGSPEFFAVRVSPGRIMFEIEGVEENVALRALELASAKLPVRTRIVRRYE.

This sequence belongs to the universal ribosomal protein uL16 family. Part of the 50S ribosomal subunit.

Binds 23S rRNA and is also seen to make contacts with the A and possibly P site tRNAs. This chain is Large ribosomal subunit protein uL16, found in Rickettsia felis (strain ATCC VR-1525 / URRWXCal2) (Rickettsia azadi).